The primary structure comprises 543 residues: CTP synthase (543 aa).

The tract at residues M1–L267 is amidoligase domain. S13 contacts CTP. S13 lines the UTP pocket. Residue S14–I19 participates in ATP binding. Y54 is an L-glutamine binding site. D71 contacts ATP. Mg(2+) contacts are provided by D71 and E141. Residues D148 to E150, K188 to Q193, and K224 contribute to the CTP site. Residues K188–Q193 and K224 each bind UTP. The Glutamine amidotransferase type-1 domain maps to K292–N534. G354 contacts L-glutamine. The active-site Nucleophile; for glutamine hydrolysis is C381. L-glutamine contacts are provided by residues L382–Q385, E405, and R462. Residues H507 and E509 contribute to the active site.

Belongs to the CTP synthase family. Homotetramer.

The catalysed reaction is UTP + L-glutamine + ATP + H2O = CTP + L-glutamate + ADP + phosphate + 2 H(+). It catalyses the reaction L-glutamine + H2O = L-glutamate + NH4(+). The enzyme catalyses UTP + NH4(+) + ATP = CTP + ADP + phosphate + 2 H(+). It functions in the pathway pyrimidine metabolism; CTP biosynthesis via de novo pathway; CTP from UDP: step 2/2. With respect to regulation, allosterically activated by GTP, when glutamine is the substrate; GTP has no effect on the reaction when ammonia is the substrate. The allosteric effector GTP functions by stabilizing the protein conformation that binds the tetrahedral intermediate(s) formed during glutamine hydrolysis. Inhibited by the product CTP, via allosteric rather than competitive inhibition. Catalyzes the ATP-dependent amination of UTP to CTP with either L-glutamine or ammonia as the source of nitrogen. Regulates intracellular CTP levels through interactions with the four ribonucleotide triphosphates. The polypeptide is CTP synthase (Synechococcus sp. (strain WH7803)).